The sequence spans 393 residues: Branched-chain-amino-acid aminotransferase, mitochondrial (393 aa).

A mitochondrion-targeting transit peptide spans 1–27; the sequence is MATAALRQIWIPRFLPVPWFLCGSRRY. Tyr169 lines the substrate pocket. At Lys230 the chain carries N6-(pyridoxal phosphate)lysine. Lys322 is subject to N6-acetyllysine.

The protein belongs to the class-IV pyridoxal-phosphate-dependent aminotransferase family. In terms of assembly, homodimer. The cofactor is pyridoxal 5'-phosphate.

The protein resides in the mitochondrion. It carries out the reaction L-leucine + 2-oxoglutarate = 4-methyl-2-oxopentanoate + L-glutamate. The catalysed reaction is L-isoleucine + 2-oxoglutarate = (S)-3-methyl-2-oxopentanoate + L-glutamate. The enzyme catalyses L-valine + 2-oxoglutarate = 3-methyl-2-oxobutanoate + L-glutamate. Its function is as follows. Catalyzes the first reaction in the catabolism of the essential branched chain amino acids leucine, isoleucine, and valine. May also function as a transporter of branched chain alpha-keto acids. The chain is Branched-chain-amino-acid aminotransferase, mitochondrial (BCAT2) from Bos taurus (Bovine).